The primary structure comprises 144 residues: D-aminoacyl-tRNA deacylase (144 aa).

Positions G136 to P137 match the Gly-cisPro motif, important for rejection of L-amino acids motif.

Belongs to the DTD family. In terms of assembly, homodimer.

The protein resides in the cytoplasm. It carries out the reaction glycyl-tRNA(Ala) + H2O = tRNA(Ala) + glycine + H(+). The enzyme catalyses a D-aminoacyl-tRNA + H2O = a tRNA + a D-alpha-amino acid + H(+). In terms of biological role, an aminoacyl-tRNA editing enzyme that deacylates mischarged D-aminoacyl-tRNAs. Also deacylates mischarged glycyl-tRNA(Ala), protecting cells against glycine mischarging by AlaRS. Acts via tRNA-based rather than protein-based catalysis; rejects L-amino acids rather than detecting D-amino acids in the active site. By recycling D-aminoacyl-tRNA to D-amino acids and free tRNA molecules, this enzyme counteracts the toxicity associated with the formation of D-aminoacyl-tRNA entities in vivo and helps enforce protein L-homochirality. The protein is D-aminoacyl-tRNA deacylase of Haemophilus ducreyi (strain 35000HP / ATCC 700724).